A 120-amino-acid polypeptide reads, in one-letter code: Ribonuclease P protein component (120 aa).

This sequence belongs to the RnpA family. As to quaternary structure, consists of a catalytic RNA component (M1 or rnpB) and a protein subunit.

The enzyme catalyses Endonucleolytic cleavage of RNA, removing 5'-extranucleotides from tRNA precursor.. Its function is as follows. RNaseP catalyzes the removal of the 5'-leader sequence from pre-tRNA to produce the mature 5'-terminus. It can also cleave other RNA substrates such as 4.5S RNA. The protein component plays an auxiliary but essential role in vivo by binding to the 5'-leader sequence and broadening the substrate specificity of the ribozyme. This chain is Ribonuclease P protein component, found in Chlamydia trachomatis serovar A (strain ATCC VR-571B / DSM 19440 / HAR-13).